The sequence spans 536 residues: Quinate permease (536 aa).

Residues 1–26 (MTLLALKEDRPTPKAVYNWRVYTCAA) lie on the Cytoplasmic side of the membrane. Residues 27-47 (IASFASCMIGYDSSFIGTTLA) form a helical membrane-spanning segment. Residues 48–74 (LPSFTKEFDFASYTPGALALLQSNIVS) lie on the Extracellular side of the membrane. A helical membrane pass occupies residues 75–95 (VYQAGAFFGSLFAFATSYFLG). At 96 to 98 (RRR) the chain is on the cytoplasmic side. Residues 99-119 (SLIAFSVVFIIGAAIMLAADG) form a helical membrane-spanning segment. Topologically, residues 120–131 (QRRGVDPIIAGR) are extracellular. The chain crosses the membrane as a helical span at residues 132–152 (VLAGIGVGGASNMVPIYISEL). Residues 153–160 (APPAVRGR) lie on the Cytoplasmic side of the membrane. Residues 161–181 (LVGIYELGWQIGGLVGFWINY) traverse the membrane as a helical segment. Over 182 to 195 (GVNTTMAPTRSQWL) the chain is Extracellular. N-linked (GlcNAc...) asparagine glycosylation is present at Asn184. Residues 196–216 (IPFAVQLIPAGLLFLGSFWIP) form a helical membrane-spanning segment. Residues 217–285 (ESPRWLFANG…SLKQPKVRWR (69 aa)) lie on the Cytoplasmic side of the membrane. Residues 286 to 306 (FFLGGMLFLWQNGSGINAINY) form a helical membrane-spanning segment. Over 307–327 (YSPTVFRSIGITGTNTGFLTT) the chain is Extracellular. The chain crosses the membrane as a helical span at residues 328-349 (GIFGVVKMVLTIIWLLWLVDLV). Residues 350-352 (GRR) are Cytoplasmic-facing. A helical transmembrane segment spans residues 353-373 (RILFVGATGGSLCMWFIGAYI). Topologically, residues 374 to 389 (KIAGPGTTKTEEAKLT) are extracellular. The helical transmembrane segment at 390–410 (SGGIAAIFFFYLWTAFYTPSW) threads the bilayer. Over 411 to 435 (NGTPWVINSEMFDQNTRSLGQASAA) the chain is Cytoplasmic. Residues 436–456 (ANNWFWNFIISRFTPQMFIKM) form a helical membrane-spanning segment. Over 457-458 (EY) the chain is Extracellular. The chain crosses the membrane as a helical span at residues 459–479 (GVYFFFASLMLLSVVFIYFFI). The Cytoplasmic portion of the chain corresponds to 480-536 (PETKSIPLEAMDRLFAIKSVHNANKILMDELNFDRNPEREQSSLDEKDRVTQTENAV). Residues 516 to 530 (PEREQSSLDEKDRVT) show a composition bias toward basic and acidic residues. The segment at 516-536 (PEREQSSLDEKDRVTQTENAV) is disordered.

This sequence belongs to the major facilitator superfamily. Sugar transporter (TC 2.A.1.1) family.

The protein resides in the membrane. This chain is Quinate permease (qa-y), found in Neurospora africana.